Reading from the N-terminus, the 103-residue chain is Large ribosomal subunit protein bL21 (103 aa).

Belongs to the bacterial ribosomal protein bL21 family. As to quaternary structure, part of the 50S ribosomal subunit. Contacts protein L20.

Its function is as follows. This protein binds to 23S rRNA in the presence of protein L20. This chain is Large ribosomal subunit protein bL21, found in Clostridioides difficile (strain 630) (Peptoclostridium difficile).